Consider the following 138-residue polypeptide: Basic phospholipase A2 homolog bothropstoxin-II (138 aa).

The signal sequence occupies residues 1-16 (MRTLWIMAVLLVGVEG). Intrachain disulfides connect Cys42–Cys131, Cys44–Cys60, Cys59–Cys111, Cys65–Cys138, Cys66–Cys104, Cys73–Cys97, and Cys91–Cys102. An important for membrane-damaging activities in eukaryotes and bacteria; heparin-binding region spans residues 121–133 (KRYMAYPDVLCKK).

The protein belongs to the phospholipase A2 family. Group II subfamily. D49 sub-subfamily. In terms of assembly, homodimer; non-covalently linked (probable alternative/compact dimer conformation). As to expression, expressed by the venom gland.

It localises to the secreted. Snake venom phospholipase A2 (PLA2) that shows low enzymatic activity even tough it conserves the catalytic residues. Shows a strong myotoxic activity and induces indirect hemolysis, anticoagulant properties, and cytotoxic activities. In vivo, it induces muscle necrosis, accompanied by polymorphonuclear cell infiltration, and edema in the mouse paw. It exerts its function even in the absence of extracellular calcium, indicating it is not a calcium-dependent enzyme. A model of myotoxic mechanism has been proposed: an apo Lys49-PLA2 is activated by the entrance of a hydrophobic molecule (e.g. fatty acid) at the hydrophobic channel of the protein leading to a reorientation of a monomer. This reorientation causes a transition between 'inactive' to 'active' states, causing alignment of C-terminal and membrane-docking sites (MDoS) side-by-side and putting the membrane-disruption sites (MDiS) in the same plane, exposed to solvent and in a symmetric position for both monomers. The MDoS region stabilizes the toxin on membrane by the interaction of charged residues with phospholipid head groups. Subsequently, the MDiS region destabilizes the membrane with penetration of hydrophobic residues. This insertion causes a disorganization of the membrane, allowing an uncontrolled influx of ions (i.e. calcium and sodium), and eventually triggering irreversible intracellular alterations and cell death. The protein is Basic phospholipase A2 homolog bothropstoxin-II of Bothrops jararacussu (Jararacussu).